A 341-amino-acid chain; its full sequence is NADH-quinone oxidoreductase subunit H (341 aa).

8 consecutive transmembrane segments (helical) span residues 6-26, 76-96, 118-138, 157-177, 198-218, 252-272, 278-298, and 313-333; these read LIVS…LMAY, LVFL…AAVI, VAVL…ILGG, VISY…LSGS, LPNW…IAAV, FLAE…LFLG, FADG…FYVW, and GLAW…TGLV.

It belongs to the complex I subunit 1 family. As to quaternary structure, NDH-1 is composed of 14 different subunits. Subunits NuoA, H, J, K, L, M, N constitute the membrane sector of the complex.

The protein localises to the cell membrane. It carries out the reaction a quinone + NADH + 5 H(+)(in) = a quinol + NAD(+) + 4 H(+)(out). NDH-1 shuttles electrons from NADH, via FMN and iron-sulfur (Fe-S) centers, to quinones in the respiratory chain. The immediate electron acceptor for the enzyme in this species is believed to be ubiquinone. Couples the redox reaction to proton translocation (for every two electrons transferred, four hydrogen ions are translocated across the cytoplasmic membrane), and thus conserves the redox energy in a proton gradient. This subunit may bind ubiquinone. The chain is NADH-quinone oxidoreductase subunit H from Thermomicrobium roseum (strain ATCC 27502 / DSM 5159 / P-2).